The primary structure comprises 517 residues: Ribonuclease Y (517 aa).

A helical membrane pass occupies residues 1 to 21 (MIEFLIGLIAAVVGILVGYLI). The 65-residue stretch at 207–271 (LINVVNIKND…IAVRTVELLV (65 aa)) folds into the KH domain. In terms of domain architecture, HD spans 333–426 (ALIHSLEVAH…VCTADVLSAA (94 aa)).

The protein belongs to the RNase Y family.

The protein resides in the cell membrane. Endoribonuclease that initiates mRNA decay. In Campylobacter hominis (strain ATCC BAA-381 / DSM 21671 / CCUG 45161 / LMG 19568 / NCTC 13146 / CH001A), this protein is Ribonuclease Y.